Reading from the N-terminus, the 166-residue chain is Large ribosomal subunit protein uL10 (166 aa).

It belongs to the universal ribosomal protein uL10 family. Part of the ribosomal stalk of the 50S ribosomal subunit. The N-terminus interacts with L11 and the large rRNA to form the base of the stalk. The C-terminus forms an elongated spine to which L12 dimers bind in a sequential fashion forming a multimeric L10(L12)X complex.

Forms part of the ribosomal stalk, playing a central role in the interaction of the ribosome with GTP-bound translation factors. The chain is Large ribosomal subunit protein uL10 from Shewanella denitrificans (strain OS217 / ATCC BAA-1090 / DSM 15013).